We begin with the raw amino-acid sequence, 384 residues long: Potassium channel subfamily K member 18 (384 aa).

Over 1–23 (MEVSGHPQARRCCPEALGKLFPG) the chain is Cytoplasmic. The chain crosses the membrane as a helical span at residues 24-44 (LCFLCFLVTYALVGAVVFSAI). N-linked (GlcNAc...) asparagine glycosylation is present at N70. Positions 103–129 (FLSSLFFCCTVFSTVGYGYIYPVTRLG) form an intramembrane region, pore-forming. K(+)-binding residues include T116, V117, G118, and Y119. The segment at 116–121 (TVGYGY) is selectivity filter 1. The helical transmembrane segment at 130–148 (KYLCMLYALFGIPLMFLVL) threads the bilayer. Residues 149 to 280 (TDTGDILATI…EVGQQVERLD (132 aa)) are Cytoplasmic-facing. The tract at residues 200 to 205 (PQIIIS) is interaction with calcineurin. The interaction with YWHAH stretch occupies residues 249–254 (RSNSCP). Phosphoserine is present on residues S252 and S264. The chain crosses the membrane as a helical span at residues 281–301 (IPLPIIALIVFAYISCAAAIL). The pore-forming intramembrane region spans 314-328 (FYFCFVTLTTIGFGD). Positions 323–328 (TIGFGD) are selectivity filter 2. The chain crosses the membrane as a helical span at residues 335–355 (NFFLFFSIYIIVGMEIVFIAF). At 356-384 (KLVQNRLIDIYKNVMLFFAKGKFYHLVKK) the chain is on the cytoplasmic side.

This sequence belongs to the two pore domain potassium channel (TC 1.A.1.8) family. Homodimer. Heterodimer with KCNK2. Heterodimer with KCNK10. Interacts with calcineurin. Interacts with YWHAH, in a phosphorylation-dependent manner. Post-translationally, N-glycosylated. In terms of processing, phosphorylation of Ser-264 is required for the binding of 14-3-3eta/YWHAH. Calcineurin-mediated dephosphorylation enhances channel activity. Expressed in dorsal root ganglion and trigeminal ganglion neurons. Detected at low levels in spinal cord. Expressed in regulatory T cells (at protein level).

It is found in the cell membrane. The catalysed reaction is K(+)(in) = K(+)(out). Its activity is regulated as follows. Activated by volatile anesthetics but inhibited by amide local anesthetics. Inhibited by Ba(2+) ions. Inhibited by free polyunsaturated fatty acids. Channel conductance is sensitive to intracellular pH, it decreases at acidic pH and increases at basic pH. In contrast to its mouse ortholog, it is not regulated by extracellular protons. Insensitive to changes in temperature. Its function is as follows. K(+) channel that conducts outward and inward rectifying currents at depolarized and hyperpolarized membrane potentials, respectively. The outward rectifying currents are voltage-dependent, coupled to K(+) electrochemical gradient across the membrane, whereas the inward currents can be induced in response to activation of Ca(2+)-mobilizing receptors. Homo- and heterodimerizes to form functional channels with distinct regulatory and gating properties. In trigeminal ganglia sensory neurons, the heterodimers of KCNK18/TRESK and KCNK2/TREK-1 or KCNK10/TREK-2 inhibit neuronal firing and neurogenic inflammation by stabilizing the resting membrane potential at K(+) equilibrium potential as well as by regulating the threshold of action potentials and the spike frequency. In thymocytes, conducts K(+) currents upon T cell receptor (TCR) signaling leading to sustained Ca(2+) influx and NF-kappa-B activation, FOXP3 transcription and positive selection of regulatory T cell (Treg) progenitor subsets. Appears to mediate the analgesics effects of hydroxy-alpha-sanshool, a metabolite naturally present in Schezuan pepper and other Xanthoxylum plants. This Homo sapiens (Human) protein is Potassium channel subfamily K member 18.